A 335-amino-acid polypeptide reads, in one-letter code: Nucleoid-associated protein YejK (335 aa).

Belongs to the YejK family.

It is found in the cytoplasm. It localises to the nucleoid. This chain is Nucleoid-associated protein YejK, found in Shigella flexneri.